The primary structure comprises 374 residues: uncharacterized protein (374 aa).

Residues 1-13 (METKYHEYDDVQT) show a composition bias toward basic and acidic residues. Disordered stretches follow at residues 1-20 (METK…PSNK), 91-193 (SPMT…PLNQ), and 236-374 (KINN…SDFE). The span at 95–155 (NNNNNNNNNN…NNSSNNNNNN (61 aa)) shows a compositional bias: low complexity. Positions 166 to 193 (ISSNQSSPLSIYSTPPNPSSYVSSPLNQ) are enriched in polar residues. Pro residues predominate over residues 242 to 262 (APPPPPKACAPPPPPPPPPPI). Low complexity predominate over residues 277 to 300 (NNNNNNNNNNNSSNTNDSNNTNNT).

This is an uncharacterized protein from Dictyostelium discoideum (Social amoeba).